Consider the following 160-residue polypeptide: UPF0262 protein Oant_0325 (160 aa).

Belongs to the UPF0262 family.

The protein is UPF0262 protein Oant_0325 of Brucella anthropi (strain ATCC 49188 / DSM 6882 / CCUG 24695 / JCM 21032 / LMG 3331 / NBRC 15819 / NCTC 12168 / Alc 37) (Ochrobactrum anthropi).